A 546-amino-acid polypeptide reads, in one-letter code: Chaperonin GroEL (546 aa).

Residues 30 to 33 (TLGP), Lys-51, 87 to 91 (DGTTT), Gly-415, 479 to 481 (NAA), and Asp-495 contribute to the ATP site.

This sequence belongs to the chaperonin (HSP60) family. In terms of assembly, forms a cylinder of 14 subunits composed of two heptameric rings stacked back-to-back. Interacts with the co-chaperonin GroES.

It is found in the cytoplasm. The enzyme catalyses ATP + H2O + a folded polypeptide = ADP + phosphate + an unfolded polypeptide.. Together with its co-chaperonin GroES, plays an essential role in assisting protein folding. The GroEL-GroES system forms a nano-cage that allows encapsulation of the non-native substrate proteins and provides a physical environment optimized to promote and accelerate protein folding. In Azotobacter vinelandii, this protein is Chaperonin GroEL.